Here is a 543-residue protein sequence, read N- to C-terminus: MTPSELKRLYQITKVQLEYGLDELLPDHALTQLPKRLRKGLFWIKNRYPEKPLGERLRLALQELGPVWIKFGQMMSTRRDLFPPHLADQLALLQDQVAPFDGQLAKDQMELSLGGPLENWFTDFDIVPLASASIAQVHTAKLKESGREIVLKVIRPDIRPVIEADIRLMYRMATLVEKHIPEARRLKPVEVIEEYEKTLIDELDLRREASNAMQLRRNFEGSEELYVPEVILDVSSEHLMVSERIYGIQVSDIEQLEKNGTNMKLLAERGVSVFFTQVFRDSFFHADMHPGNVFVNPDNPENPQWIGLDCGIVGTLNKEDKRYLAENLLGFFNSDYRKVAQLHIDSGWVPAETNVEEFEFAIRIVCEPIFAKPLGEISFGHVLLNLFNTARRFNMEVQPQLVLLQKTLLYVEGLGRQLYPQLDLWATAKPFLETWMAKQIGPAAFLTALTEKAPFWAEKLPELPDLVYDSLRQGKVLNQRMDKLYAGYRQSKRQQAKGQFLFNVGATLLICSAVLLTSNITALASISAATGVTFWLLSWRAYR.

The 379-residue stretch at 123 to 501 (DFDIVPLASA…KRQQAKGQFL (379 aa)) folds into the Protein kinase domain. Residues 129 to 137 (LASASIAQV) and Lys152 contribute to the ATP site. Asp287 serves as the catalytic Proton acceptor. A helical membrane pass occupies residues 517–539 (TSNITALASISAATGVTFWLLSW).

This sequence belongs to the ABC1 family. UbiB subfamily.

The protein localises to the cell inner membrane. It participates in cofactor biosynthesis; ubiquinone biosynthesis [regulation]. Its function is as follows. Is probably a protein kinase regulator of UbiI activity which is involved in aerobic coenzyme Q (ubiquinone) biosynthesis. In Aliivibrio salmonicida (strain LFI1238) (Vibrio salmonicida (strain LFI1238)), this protein is Probable protein kinase UbiB.